A 1388-amino-acid chain; its full sequence is Dicer-like protein 2 (1388 aa).

The Helicase ATP-binding domain occupies 23-203 (MLEASMKENI…LLTVESNLDA (181 aa)). An ATP-binding site is contributed by 36-43 (MDTGSGKT). The DEAH box motif lies at 144-147 (DEAH). The region spanning 371–537 (SLLNFLDSLD…DDERQLQSVS (167 aa)) is the Helicase C-terminal domain. A Dicer dsRNA-binding fold domain is found at 564-658 (AMAHLHHFCA…LPLTKRPELK (95 aa)). 2 RNase III domains span residues 919–1059 (ATRL…MDGG) and 1098–1281 (NERL…VDSG). Glu-1137, Asp-1267, and Glu-1270 together coordinate Mg(2+).

This sequence belongs to the helicase family. Dicer subfamily. It depends on Mg(2+) as a cofactor. Mn(2+) serves as cofactor.

In terms of biological role, dicer-like endonuclease involved in cleaving double-stranded RNA in the RNA interference (RNAi) pathway. Produces 21 to 25 bp dsRNAs (siRNAs) which target the selective destruction of homologous RNAs leading to sequence-specific suppression of gene expression, called post-transcriptional gene silencing (PTGS). Part of a broad host defense response against viral infection and transposons. This Neosartorya fischeri (strain ATCC 1020 / DSM 3700 / CBS 544.65 / FGSC A1164 / JCM 1740 / NRRL 181 / WB 181) (Aspergillus fischerianus) protein is Dicer-like protein 2 (dcl2).